The following is a 75-amino-acid chain: Kappa-thalatoxin-Cad2a (75 aa).

An N-terminal signal peptide occupies residues 1-22 (MKFQMIAAVLLIAFCLCVVVTA). Positions 23-40 (RMELQDVEDMKNGSFQKR) are excised as a propeptide. Residues 43–75 (CIDTIPKSRCTAFQCKNSMKYRLSFCRKTCGTC) form the ShKT domain. 3 cysteine pairs are disulfide-bonded: Cys43-Cys75, Cys52-Cys68, and Cys57-Cys72.

This sequence belongs to the sea anemone type 1 potassium channel toxin family. Type 1a subfamily.

The protein localises to the secreted. Its subcellular location is the nematocyst. Inhibits voltage-gated potassium channels (Kv) with higher potency for Kv1.1/KCNA1 and Kv1.3/KCNA3. This is Kappa-thalatoxin-Cad2a from Cryptodendrum adhaesivum (Adhesive sea anemone).